Reading from the N-terminus, the 487-residue chain is GTPase Der (487 aa).

2 consecutive EngA-type G domains span residues 3–167 (FTLA…EGFA) and 203–378 (LQIA…DIWN). Residues 9 to 16 (GRPNVGKS), 56 to 60 (DTAGL), 119 to 122 (NKAE), 209 to 216 (GRPNAGKS), 256 to 260 (DTAGM), and 321 to 324 (NKWD) contribute to the GTP site. The 85-residue stretch at 379-463 (RRITTARLNS…PIRLTMRGQG (85 aa)) folds into the KH-like domain. The disordered stretch occupies residues 459–487 (MRGQGDKNPFKERKFRTPSRLRKHLGKKG). The segment covering 471–487 (RKFRTPSRLRKHLGKKG) has biased composition (basic residues).

It belongs to the TRAFAC class TrmE-Era-EngA-EngB-Septin-like GTPase superfamily. EngA (Der) GTPase family. As to quaternary structure, associates with the 50S ribosomal subunit.

Functionally, GTPase that plays an essential role in the late steps of ribosome biogenesis. The chain is GTPase Der from Cereibacter sphaeroides (strain ATCC 17025 / ATH 2.4.3) (Rhodobacter sphaeroides).